Consider the following 444-residue polypeptide: Inward rectifier potassium channel 4 (444 aa).

Residues 1–55 (MHGHNRNGQAHVPRRKRRNRFVKKNGQCNVYFANLSNKSQRYMADIFTTCVDTRW) are Cytoplasmic-facing. Residues 56–80 (RYMLMLFSAAFLVSWLFFGLLFWCI) traverse the membrane as a helical segment. Over 81–119 (AFFHGDLEASPSVPAAGAPGGNGGAAPAAPKPCIMHVNG) the chain is Extracellular. An intramembrane region (helical; Pore-forming) is located at residues 120-131 (FLGAFLFSVETQ). The pore-forming intramembrane region spans 132-138 (TTIGYGF). The short motif at 133 to 138 (TIGYGF) is the Selectivity filter element. Over 139–147 (RCVTEECPL) the chain is Extracellular. Residues 148–169 (AVIAVVVQSIVGCVIDSFMIGT) traverse the membrane as a helical segment. The Cytoplasmic portion of the chain corresponds to 170 to 444 (IMAKMARPKK…NISYRRESAI (275 aa)). The short motif at 442 to 444 (SAI) is the PDZ-binding element.

The protein belongs to the inward rectifier-type potassium channel (TC 1.A.2.1) family. KCNJ4 subfamily. In terms of assembly, homomultimeric and heteromultimeric association with KCNJ2 and KCNJ12. Interacts with DLG2 and DLG4. Associates, via its PDZ-recognition domain, with a complex containing LIN7A, LIN7B, LIN7C, DLG1, CASK and APBA1. Interacts with TAX1BP3. TAX1BP3 competes with LIN7 family members for KCNJ4 binding.

The protein resides in the cell membrane. Its subcellular location is the postsynaptic cell membrane. It localises to the cytoplasmic vesicle membrane. It carries out the reaction K(+)(in) = K(+)(out). Inward rectifier potassium channels are characterized by a greater tendency to allow potassium to flow into the cell rather than out of it. Their voltage dependence is regulated by the concentration of extracellular potassium; as external potassium is raised, the voltage range of the channel opening shifts to more positive voltages. The inward rectification is mainly due to the blockage of outward current by internal magnesium. Can be blocked by extracellular barium and cesium. This is Inward rectifier potassium channel 4 (KCNJ4) from Mesocricetus auratus (Golden hamster).